A 239-amino-acid polypeptide reads, in one-letter code: Ribosomal RNA small subunit methyltransferase G (239 aa).

Residues Gly77, Phe82, 128–129 (AE), and Arg147 contribute to the S-adenosyl-L-methionine site.

It belongs to the methyltransferase superfamily. RNA methyltransferase RsmG family.

The protein localises to the cytoplasm. In terms of biological role, specifically methylates the N7 position of guanine in position 535 of 16S rRNA. The polypeptide is Ribosomal RNA small subunit methyltransferase G (Bacillus cereus (strain G9842)).